The chain runs to 217 residues: 3,4-dihydroxy-2-butanone 4-phosphate synthase (217 aa).

D-ribulose 5-phosphate is bound by residues 37–38 (RE), D42, 150–154 (RRGHT), and E174. E38 contributes to the Mg(2+) binding site. H153 is a binding site for Mg(2+).

This sequence belongs to the DHBP synthase family. In terms of assembly, homodimer. Requires Mg(2+) as cofactor. Mn(2+) serves as cofactor.

It catalyses the reaction D-ribulose 5-phosphate = (2S)-2-hydroxy-3-oxobutyl phosphate + formate + H(+). It participates in cofactor biosynthesis; riboflavin biosynthesis; 2-hydroxy-3-oxobutyl phosphate from D-ribulose 5-phosphate: step 1/1. Its function is as follows. Catalyzes the conversion of D-ribulose 5-phosphate to formate and 3,4-dihydroxy-2-butanone 4-phosphate. The polypeptide is 3,4-dihydroxy-2-butanone 4-phosphate synthase (Tolumonas auensis (strain DSM 9187 / NBRC 110442 / TA 4)).